The chain runs to 76 residues: Small ribosomal subunit protein uS17 (76 aa).

Belongs to the universal ribosomal protein uS17 family. Part of the 30S ribosomal subunit.

Functionally, one of the primary rRNA binding proteins, it binds specifically to the 5'-end of 16S ribosomal RNA. This chain is Small ribosomal subunit protein uS17, found in Ruegeria pomeroyi (strain ATCC 700808 / DSM 15171 / DSS-3) (Silicibacter pomeroyi).